Consider the following 301-residue polypeptide: GTPase Era (301 aa).

Residues 7 to 175 (YCGFIAIVGR…AGIVRKHLPE (169 aa)) form the Era-type G domain. Residues 15–22 (GRPNVGKS) form a G1 region. 15 to 22 (GRPNVGKS) contacts GTP. The tract at residues 41-45 (QTTRH) is G2. Positions 62-65 (DTPG) are G3. GTP-binding positions include 62 to 66 (DTPGL) and 124 to 127 (NKVD). Residues 124 to 127 (NKVD) are G4. Residues 154 to 156 (ISA) are G5. The 78-residue stretch at 206 to 283 (LGAELPYSVT…HLELWVKVKS (78 aa)) folds into the KH type-2 domain.

Belongs to the TRAFAC class TrmE-Era-EngA-EngB-Septin-like GTPase superfamily. Era GTPase family. As to quaternary structure, monomer.

It localises to the cytoplasm. Its subcellular location is the cell inner membrane. Functionally, an essential GTPase that binds both GDP and GTP, with rapid nucleotide exchange. Plays a role in 16S rRNA processing and 30S ribosomal subunit biogenesis and possibly also in cell cycle regulation and energy metabolism. The sequence is that of GTPase Era from Salmonella heidelberg (strain SL476).